The primary structure comprises 1260 residues: Neural cell adhesion molecule L1 (1260 aa).

The N-terminal stretch at 1 to 19 is a signal peptide; the sequence is MVVMLRYVWPLLLCSPCLL. Over 20–1123 the chain is Extracellular; sequence IQIPDEYKGH…VSTTGSFASE (1104 aa). Ig-like C2-type domains follow at residues 35 to 130, 138 to 225, 239 to 327, 332 to 419, 424 to 506, and 517 to 600; these read PVIT…IQLV, PKET…EPID, PRLL…YYVT, PYWL…AYIY, PARI…NNVT, and TQIT…DEVE. Cystine bridges form between C57–C113 and C157–C208. N-linked (GlcNAc...) asparagine glycans are attached at residues N100, N202, N246, and N293. Disulfide bonds link C263–C311 and C353–C403. N-linked (GlcNAc...) asparagine glycans are attached at residues N432, N478, N489, and N504. An intrachain disulfide couples C447 to C496. A disulfide bond links C538 and C590. Short sequence motifs (cell attachment site) lie at residues 553-555 and 562-564; these read RGD. N587 and N670 each carry an N-linked (GlcNAc...) asparagine glycan. Fibronectin type-III domains follow at residues 613–711, 716–809, 811–916, 919–1015, and 1014–1112; these read PVPH…TPEA, NPVD…SGED, PQVS…PEGV, HPEA…MALF, and LFGK…TGPV. The segment at 697-724 is disordered; the sequence is GEPSPVSESVVTPEAAPEKNPVDVRGEG. Residues 712-724 show a composition bias toward basic and acidic residues; sequence APEKNPVDVRGEG. N-linked (GlcNAc...) asparagine glycans are attached at residues N725, N776, N824, N848, N875, N968, N978, N1022, N1030, N1073, and N1107. A helical transmembrane segment spans residues 1124-1146; sequence GWFIAFVSAIILLLLILLILCFI. Over 1147-1260 the chain is Cytoplasmic; sequence KRSKGGKYSV…SPINPAVALE (114 aa). 7 positions are modified to phosphoserine: S1166, S1181, S1184, S1197, S1246, S1247, and S1251. Disordered stretches follow at residues 1183–1210 and 1229–1260; these read ESDNEEKAFGSSQPSLNGDIKPLGSDDS and IGQYSGKKEKEAAGGNDSSGATSPINPAVALE. The span at 1244–1253 shows a compositional bias: polar residues; that stretch reads NDSSGATSPI.

This sequence belongs to the immunoglobulin superfamily. L1/neurofascin/NgCAM family. Interacts with SHTN1; the interaction occurs in axonal growth cones. Interacts with isoform 2 of BSG. As to expression, expressed in the brain, including in the molecular layer of the cerebellar cortex, the fiber-rich layers of the hippocampus (alveus, and strata lacunosum moleculare, radiatum, and oriens), the nerve fiber layer and the inner and outer plexiform layers of the retina, and in the molecular layer of the olfactory bulb (at protein level).

It is found in the cell membrane. It localises to the cell projection. The protein resides in the growth cone. Its function is as follows. Neural cell adhesion molecule involved in the dynamics of cell adhesion and in the generation of transmembrane signals at tyrosine kinase receptors. During brain development, critical in multiple processes, including neuronal migration, axonal growth and fasciculation, and synaptogenesis. In the mature brain, plays a role in the dynamics of neuronal structure and function, including synaptic plasticity. The protein is Neural cell adhesion molecule L1 (L1cam) of Mus musculus (Mouse).